The chain runs to 2226 residues: Rotatin (2226 aa).

The interval 295–345 is disordered; the sequence is ARGTHHSQNPSPGSSSPRPSVVGRTGQRPRGDGQDWDAASSSGSSSHAHVN. Low complexity-rich tracts occupy residues 304–318 and 332–343; these read PSPGSSSPRPSVVGR and AASSSGSSSHAH. Residue serine 310 is modified to Phosphoserine. The residue at position 811 (lysine 811) is an N6-acetyllysine. Residues 1534-1554 form a disordered region; the sequence is SRTSQDRDPSSLSTSETTVAP. Positions 1543 to 1554 are enriched in polar residues; sequence SSLSTSETTVAP.

The protein belongs to the rotatin family. As to quaternary structure, interacts with PPP1R35; this interaction allows the mutual recruitment to the centriole.

The protein localises to the cytoplasm. Its subcellular location is the cytoskeleton. It localises to the cilium basal body. The protein resides in the microtubule organizing center. It is found in the centrosome. Functionally, involved in the genetic cascade that governs left-right specification. Plays a role in the maintenance of a normal ciliary structure. Required for correct asymmetric expression of NODAL, LEFTY and PITX2. This Homo sapiens (Human) protein is Rotatin.